The primary structure comprises 224 residues: 7-cyano-7-deazaguanine synthase (224 aa).

10–20 (LSGGLDSATVV) contributes to the ATP binding site. Positions 189, 199, 202, and 205 each coordinate Zn(2+).

The protein belongs to the QueC family. Zn(2+) serves as cofactor.

The enzyme catalyses 7-carboxy-7-deazaguanine + NH4(+) + ATP = 7-cyano-7-deazaguanine + ADP + phosphate + H2O + H(+). It functions in the pathway purine metabolism; 7-cyano-7-deazaguanine biosynthesis. Functionally, catalyzes the ATP-dependent conversion of 7-carboxy-7-deazaguanine (CDG) to 7-cyano-7-deazaguanine (preQ(0)). The polypeptide is 7-cyano-7-deazaguanine synthase (Pseudomonas putida (strain ATCC 47054 / DSM 6125 / CFBP 8728 / NCIMB 11950 / KT2440)).